A 125-amino-acid chain; its full sequence is Small ribosomal subunit protein uS12m (125 aa).

2 disordered regions span residues 1 to 29 and 105 to 125; these read MPTK…QCPQ and LGIP…PKSK. Basic and acidic residues predominate over residues 10-23; that stretch reads HGREEKQRTDRTRA.

The protein belongs to the universal ribosomal protein uS12 family.

The protein localises to the mitochondrion. Its function is as follows. Protein S12 is involved in the translation initiation step. The protein is Small ribosomal subunit protein uS12m (RPS12) of Oryza sativa subsp. japonica (Rice).